Consider the following 436-residue polypeptide: Homeobox protein PKNOX1 (436 aa).

The interval 24–49 (LKTEQDPNCSEPDVEGVSPPPVGSQT) is disordered. A phosphoserine mark is found at Ser-33 and Ser-41. The 84-residue stretch at 80-163 (GSEGTTSASF…MNSETLLSGE (84 aa)) folds into the MEIS N-terminal domain. The segment at residues 259-321 (SKNKRGVLPK…NARRRILQPM (63 aa)) is a DNA-binding region (homeobox; TALE-type). The tract at residues 401–436 (AEQSEDDSVDSTGDGGAALAPGHLGGLVLENSDSLQ) is disordered.

The protein belongs to the TALE/MEIS homeobox family. In terms of assembly, interacts with MN1.

The protein resides in the nucleus. Functionally, activates transcription in the presence of PBX1A and HOXA1. In Bos taurus (Bovine), this protein is Homeobox protein PKNOX1.